We begin with the raw amino-acid sequence, 30 residues long: Bacteriocin curvaticin (30 aa).

Cysteine 9 and cysteine 14 are oxidised to a cystine.

It localises to the secreted. Functionally, has antibacterial activity against the Gram-positive bacterium L.monocytogenes. The polypeptide is Bacteriocin curvaticin (Latilactobacillus curvatus (Lactobacillus curvatus)).